Reading from the N-terminus, the 788-residue chain is IQ motif and ubiquitin-like domain-containing protein (788 aa).

The interval 1–89 (MSDPEEERVA…SLGSASGSQD (89 aa)) is disordered. The span at 7 to 20 (ERVADSTAHYEEAG) shows a compositional bias: basic and acidic residues. Acidic residues predominate over residues 31-54 (EAEGSDVMPEQDDEVQELTTESEE). The segment covering 68–78 (KSDDSKPREEV) has biased composition (basic and acidic residues). A compositionally biased stretch (polar residues) spans 80–89 (SLGSASGSQD). Residues 127 to 203 (ATVKIVLIPA…VQVEVFSTLP (77 aa)) enclose the Ubiquitin-like domain. One can recognise an IQ domain in the interval 334 to 363 (RLHAVIVIQTSYRRWHAKRYVESLRKQKKL).

As to quaternary structure, component of the axonemal radial spoke 1 (RS1) complex, at least composed of spoke head proteins RSPH1, RSPH3B, RSPH9 and the cilia-specific component RSPH4A or sperm-specific component RSPH6A, spoke stalk proteins RSPH14, DNAJB13, DYDC1, ROPN1L and NME5, and the anchor protein IQUB. Does not appear to be part of radial spoke complexes 2 or 3 (RS2 or RS3). Interacts with CALM1. Interacts with DNAJB13. Interacts with DYNLL2. Interacts with NME5. Interacts with RSPH3. Interacts with RSPH9. Interacts with ZMYND10. Interacts with calmodulin; the interaction occurs in conditions of low but not high calcium. As to expression, expressed in the flagellum of sperm cells and cilia of tracheal epithelial cells (at protein level). High expression in testis, also present in brain and lung.

It is found in the cytoplasm. Its subcellular location is the cytoskeleton. The protein resides in the flagellum axoneme. It localises to the cell projection. The protein localises to the cilium. Functionally, anchors the radial spoke 1 (RS1) complex to the A microtubule of outer doublet microtubules in axonemes. The triple radial spokes (RS1, RS2 and RS3) are required to modulate beating of the sperm flagellum. May play a role in inhibiting signaling via MAPK1/ERK2 and MAPK3/ERK1. Additionally, may play a role in the functioning of cilia. Not required for the functioning of tracheal or ependymal cilia. This is IQ motif and ubiquitin-like domain-containing protein (Iqub) from Mus musculus (Mouse).